We begin with the raw amino-acid sequence, 130 residues long: Small ribosomal subunit protein uS8 (130 aa).

It belongs to the universal ribosomal protein uS8 family. Part of the 30S ribosomal subunit.

Its function is as follows. One of the primary rRNA binding proteins, it binds directly to 16S rRNA central domain where it helps coordinate assembly of the platform of the 30S subunit. This chain is Small ribosomal subunit protein uS8, found in Methanococcus maripaludis (strain C6 / ATCC BAA-1332).